Consider the following 522-residue polypeptide: U4/U6 small nuclear ribonucleoprotein Prp4 (522 aa).

Residues 1–13 (MASSRASSTQATK) are compositionally biased toward polar residues. The disordered stretch occupies residues 1-20 (MASSRASSTQATKTKAPDDL). Lysine 27 is subject to N6-acetyllysine. 7 WD repeats span residues 229–268 (GDDR…LLHT), 271–318 (GHNT…PVAD), 321–360 (GHTV…EILH), 363–402 (GHSM…CIMF), 405–444 (GHLK…CVYT), 447–487 (AHQN…PLKT), and 490–521 (GHEG…LWMA).

Component of the precatalytic spliceosome (spliceosome B complex). Component of the U4/U6-U5 tri-snRNP complex, a building block of the precatalytic spliceosome (spliceosome B complex). The U4/U6-U5 tri-snRNP complex is composed of the U4, U6 and U5 snRNAs and at least PRPF3, PRPF4, PRPF6, PRPF8, PRPF31, SNRNP200, TXNL4A, SNRNP40, SNRPB, SNRPD1, SNRPD2, SNRPD3, SNRPE, SNRPF, SNRPG, DDX23, CD2BP2, PPIH, SNU13, EFTUD2, SART1 and USP39, plus LSM2, LSM3, LSM4, LSM5, LSM6, LSM7 and LSM8. Interacts directly with PRPF18, PPIH and PRPF3. Part of a heteromeric complex containing PPIH, PRPF3 and PRPF4 that is stable in the absence of RNA. Interacts with ERCC6.

It is found in the nucleus. The protein localises to the nucleus speckle. Its function is as follows. Plays a role in pre-mRNA splicing as component of the U4/U6-U5 tri-snRNP complex that is involved in spliceosome assembly, and as component of the precatalytic spliceosome (spliceosome B complex). The protein is U4/U6 small nuclear ribonucleoprotein Prp4 (PRPF4) of Homo sapiens (Human).